We begin with the raw amino-acid sequence, 514 residues long: tRNA-2-methylthio-N(6)-dimethylallyladenosine synthase (514 aa).

In terms of domain architecture, MTTase N-terminal spans 68 to 186 (RTFLIKTYGC…LPEILEEAYL (119 aa)). [4Fe-4S] cluster contacts are provided by Cys77, Cys113, Cys147, Cys223, Cys227, and Cys230. Positions 209–439 (REGSTKAWVN…NKKVGHYSEK (231 aa)) constitute a Radical SAM core domain. Residues 442–505 (NQYEGKTVTV…QYSLNGTFKE (64 aa)) enclose the TRAM domain.

This sequence belongs to the methylthiotransferase family. MiaB subfamily. In terms of assembly, monomer. [4Fe-4S] cluster is required as a cofactor.

Its subcellular location is the cytoplasm. The catalysed reaction is N(6)-dimethylallyladenosine(37) in tRNA + (sulfur carrier)-SH + AH2 + 2 S-adenosyl-L-methionine = 2-methylsulfanyl-N(6)-dimethylallyladenosine(37) in tRNA + (sulfur carrier)-H + 5'-deoxyadenosine + L-methionine + A + S-adenosyl-L-homocysteine + 2 H(+). Catalyzes the methylthiolation of N6-(dimethylallyl)adenosine (i(6)A), leading to the formation of 2-methylthio-N6-(dimethylallyl)adenosine (ms(2)i(6)A) at position 37 in tRNAs that read codons beginning with uridine. This is tRNA-2-methylthio-N(6)-dimethylallyladenosine synthase from Staphylococcus haemolyticus (strain JCSC1435).